The chain runs to 472 residues: MADYWKDVLPVDPYVVKSRSMLQDIDRQIITQLYQPLIGPVAFSLYMTLWGELEQNRLWGGESTHRQLMGMTQSNLKTIHQEQGKLEGIGLLKVYMKESERQERLFIYELLPPLRPNEFFEDGMLNVFLYNRVGKTKYQQLKQFFTHPAISEDAKDITRPFNHAFESLQPSEWKLTSDMEETVRLAEGSEYTSVGQSPSYTITEDVFDFDLFLAGLSETMIPRKAMTQQVRDTIKKLSYLYGIDPLQMQNVVMSAIDERDVITTEALRKAASDWYQIERNGQLPDLVEKTQPVHLREGEQPAEEDSLDGKLIALLEAISPKKLLQDIADGTEPSKADLKIIEEIMFEQKLEPGVTNVLIYYVMLKTDMKLSKNYIQKIASHWARKKVKTVREAMKLAIEENRQYLEWAEGKTKSSKRNQKVIREEKLPDWMTEKETASDSESGQQKLHPQDLEEQKKKMMEEMQKLKKYSAY.

A DDBH1 region spans residues 1-112 (MADYWKDVLP…ERLFIYELLP (112 aa)). The interval 210-302 (DLFLAGLSET…VHLREGEQPA (93 aa)) is DDBH2-1. The DDBH2-2 stretch occupies residues 303–411 (EEDSLDGKLI…RQYLEWAEGK (109 aa)). Positions 415-472 (SKRNQKVIREEKLPDWMTEKETASDSESGQQKLHPQDLEEQKKKMMEEMQKLKKYSAY) are disordered. Basic and acidic residues-rich tracts occupy residues 421–437 (VIRE…KETA) and 448–465 (HPQD…EMQK).

Belongs to the DnaB/DnaD family. In terms of assembly, homotetramer. Also forms higher-order oligomers, can be induced by some ssDNA. The DNA replisome assembles sequentially on oriC in this order; DnaA, DnaD, DnaB, DnaI-DnaC helicase. In atomic force microscopy forms a square with a small central hole. Part of the replication restart primosome which assembles in this order; PriA, DnaD then DnaB. The preferred DNA substrate mimics an arrested DNA replication fork with unreplicated lagging strand. Interacts with DnaC, but probably not as a tetramer. Interacts with DnaD but no interaction with PriA was seen. Interacts with cell cycle regulator CcrZ. Post-translationally, in early growth phase only full-length protein is detected, during late growth and stationary phase full-length and C-terminally truncated proteins are seen (at protein level). Truncated protein is only seen in cytoplasmic fractions.

It localises to the cytoplasm. The protein localises to the cell membrane. Functionally, helps DnaI load the DnaC replicative helicase onto single-stranded (ss)DNA. During DNA replication from the origin of replication (oriC) in the DNA replisome, DnaD is required after DnaA, before DnaB and before subsequent helicase DnaC loading. Component of the replication restart primosome, which reloads the replicative helicase on sites other than oriC. DnaB, DnaD and DnaI may also be required for a PriA-independent pathway of replication fork restart. DnaB and DnaD work together to allow DnaB access to ssDNA. DNA replication at oriC might originate on the inner face of the cell membrane; DnaB is essential for both replication initiation and cell membrane attachment of the origin region of the chromosome and plasmids. Weakly binds ssDNA, preferentially binds double-stranded (ds)DNA, and replication fork-like substrates. Remodels DNA, laterally compacts supercoiled plasmid and linear DNA, forms beads along the dsDNA. Together DnaB and DnaD form bipolar complexes on plasmid DNA. DnaB and DnaD are also required to load helicase on the repN plasmid origin of replication (oriN). In Bacillus subtilis (strain 168), this protein is Replicative helicase loading/DNA remodeling protein DnaB.